Reading from the N-terminus, the 86-residue chain is Small ribosomal subunit protein bS18 (86 aa).

The protein belongs to the bacterial ribosomal protein bS18 family. Part of the 30S ribosomal subunit. Forms a tight heterodimer with protein bS6.

Its function is as follows. Binds as a heterodimer with protein bS6 to the central domain of the 16S rRNA, where it helps stabilize the platform of the 30S subunit. The protein is Small ribosomal subunit protein bS18 of Maridesulfovibrio salexigens (strain ATCC 14822 / DSM 2638 / NCIMB 8403 / VKM B-1763) (Desulfovibrio salexigens).